The primary structure comprises 206 residues: MNHSEQPFDVKEALLFSQRMAQLSKALWKSIEKDWQQWIKPYNLNINEHHILWIAYQLKGASISEIAKFGVMHVSTAFNFSKKLEERGFLKFSKKLNDKRNTYIELTPKGEETFHKLLEDYDPARTGIVKGAQPLHDIYGKFPEILEMMCIIRNIYGEDFMEIFEKSFSNIEKDFLNERGRVTKKSEELEDSADAAEKAAKANQIV.

The 145-residue stretch at 13–157 folds into the HTH marR-type domain; sequence ALLFSQRMAQ…MMCIIRNIYG (145 aa). The H-T-H motif DNA-binding region spans 63–86; the sequence is ISEIAKFGVMHVSTAFNFSKKLEE. The tract at residues 186-206 is disordered; that stretch reads SEELEDSADAAEKAAKANQIV.

Homodimer.

In terms of biological role, negative regulator of protease production and sporulation. The protein is HTH-type transcriptional regulator Hpr of Bacillus pumilus (strain SAFR-032).